Here is a 779-residue protein sequence, read N- to C-terminus: GATOR2 complex protein WDR24 (779 aa).

WD repeat units follow at residues 66–106 (SLNF…RNKQ), 112–152 (EHKR…SVST), 155–195 (GQSE…RYER), 199–239 (AHTG…VKEI), 243–285 (QTFA…IPFA), and 289–332 (EHKD…VDRA). 2 disordered regions span residues 506-526 (LETNLNNNDENEETEGSEGQA) and 570-590 (DHPSAPEPLQEKQESPHVSGS). A C4-type zinc finger spans residues 707–729 (NCSNCKRPMSNKGWICDRCHQCA). 15 residues coordinate Zn(2+): C708, C711, C722, C725, C732, C735, C746, C749, H751, H754, H757, C768, C772, H774, and C776. Residues 730–779 (SVCAVCHHVVKGLFVWCQGCSHGGHLEHVMEWLKQSKHCPAGCGHLCEYT) form an RING-type; atypical zinc finger.

The protein belongs to the WD repeat WDR24 family. In terms of assembly, component of the GATOR2 subcomplex, composed of MIOS, SEC13, SEH1L, WDR24 and WDR59. The GATOR2 complex interacts with CASTOR1 and CASTOR2; the interaction is negatively regulated by arginine. The GATOR2 complex interacts with SESN1, SESN2 and SESN3; the interaction is negatively regulated by amino acids.

The protein resides in the lysosome membrane. The catalysed reaction is S-ubiquitinyl-[E2 ubiquitin-conjugating enzyme]-L-cysteine + [acceptor protein]-L-lysine = [E2 ubiquitin-conjugating enzyme]-L-cysteine + N(6)-ubiquitinyl-[acceptor protein]-L-lysine.. The protein operates within protein modification; protein ubiquitination. With respect to regulation, the GATOR2 complex is negatively regulated by the upstream amino acid sensors CASTOR1 and SESN2, which sequester the GATOR2 complex in absence of amino acids. In the presence of abundant amino acids, GATOR2 is released from CASTOR1 and SESN2 and activated. Functionally, catalytic component of the GATOR2 complex, a multiprotein complex that acts as an activator of the amino acid-sensing branch of the mTORC1 signaling pathway. The GATOR2 complex indirectly activates mTORC1 through the inhibition of the GATOR1 subcomplex. GATOR2 probably acts as an E3 ubiquitin-protein ligase toward GATOR1. In the presence of abundant amino acids, the GATOR2 complex mediates ubiquitination of the NPRL2 core component of the GATOR1 complex, leading to GATOR1 inactivation. In the absence of amino acids, GATOR2 is inhibited, activating the GATOR1 complex. In addition to its role in regulation of the mTORC1 complex, promotes the acidification of lysosomes and facilitates autophagic flux. Within the GATOR2 complex, WDR24 constitutes the catalytic subunit that mediates 'Lys-6'-linked ubiquitination of NPRL2. The protein is GATOR2 complex protein WDR24 of Danio rerio (Zebrafish).